We begin with the raw amino-acid sequence, 309 residues long: L-aminoadipate-semialdehyde dehydrogenase-phosphopantetheinyl transferase (309 aa).

CoA-binding positions include Arg47, Arg86 to Lys91, and Asn108 to His111. The Mg(2+) site is built by Asp129 and Glu181. A CoA-binding site is contributed by Glu181 to Lys185.

Belongs to the P-Pant transferase superfamily. AcpS family. Monomer. It depends on Mg(2+) as a cofactor.

Its subcellular location is the cytoplasm. It localises to the cytosol. It carries out the reaction apo-[ACP] + CoA = holo-[ACP] + adenosine 3',5'-bisphosphate + H(+). The enzyme catalyses apo-[ACP] + acetyl-CoA = acetyl-[ACP] + adenosine 3',5'-bisphosphate + H(+). Functionally, catalyzes the post-translational modification of target proteins by phosphopantetheine. Can transfer the 4'-phosphopantetheine moiety from coenzyme A, regardless of whether the CoA is presented in the free thiol form or as an acetyl thioester, to a serine residue of a broad range of acceptors including the acyl carrier domain of FASN. In Mus musculus (Mouse), this protein is L-aminoadipate-semialdehyde dehydrogenase-phosphopantetheinyl transferase (Aasdhppt).